Consider the following 331-residue polypeptide: DNA polymerase IV (331 aa).

The region spanning 1–174 is the UmuC domain; it reads FFAAVEMRDN…LPLAKIPGVG (174 aa). Aspartate 92 serves as a coordination point for Mg(2+). The active site involves glutamate 93.

It belongs to the DNA polymerase type-Y family. As to quaternary structure, monomer. Requires Mg(2+) as cofactor.

It is found in the cytoplasm. The enzyme catalyses DNA(n) + a 2'-deoxyribonucleoside 5'-triphosphate = DNA(n+1) + diphosphate. Poorly processive, error-prone DNA polymerase involved in untargeted mutagenesis. Copies undamaged DNA at stalled replication forks, which arise in vivo from mismatched or misaligned primer ends. These misaligned primers can be extended by PolIV. Exhibits no 3'-5' exonuclease (proofreading) activity. May be involved in translesional synthesis, in conjunction with the beta clamp from PolIII. The chain is DNA polymerase IV from Escherichia fergusonii.